A 206-amino-acid chain; its full sequence is MKLADAIATAPRRTLKGTYWHQGPTRHPVTSCADPARGPGRYHRTGEPGVWYASNKEQGAWAELFRHFVDDGVDPFEVRRRVGRVAVTLQVLDLTDERTRSHLGVDETDLLSDDYTTTQAIAAARDANFDAVLAPAAALPGCQTLAVFVHALPNIEPERSEVRQPPPRLANLLPLIRPHEHMPDSVRRLLATLTRAGAEAIRRRRR.

It belongs to the MbcT/ParT/Res family. In terms of assembly, forms a heterotetramer with cognate antitoxin Rv3188.

It catalyses the reaction phosphate + NAD(+) = ADP-alpha-D-ribose 1''-phosphate + nicotinamide + H(+). In terms of biological role, probable toxic component of a type II toxin-antitoxin (TA) system. Degrades NAD(+) by phosphorolysis. Neutralized by its cognate antitoxin Rv3188. The sequence is that of Probable NAD(+) phosphorylase Rv3189 from Mycobacterium tuberculosis (strain ATCC 25618 / H37Rv).